We begin with the raw amino-acid sequence, 307 residues long: Myoblast determination protein 1 homolog (307 aa).

One can recognise a bHLH domain in the interval 109-160; the sequence is DRRKAATLRERRRLSKVNEAFETLKRCTNTNPNQRLPKVEILRNAISYIESL. Positions 271–307 are disordered; the sequence is TATSSGPPPVDGRGSPGPLQASSPRSSREPNLIYQVL.

In terms of assembly, efficient DNA binding requires dimerization with another bHLH protein. In terms of tissue distribution, expressed in fast and myotomal muscle. Very weak expression in brain, skin and gonads.

It is found in the nucleus. May act as a transcriptional activator that promotes transcription of muscle-specific target genes and plays a role in muscle differentiation. This chain is Myoblast determination protein 1 homolog (myod), found in Takifugu rubripes (Japanese pufferfish).